A 305-amino-acid chain; its full sequence is Aspartate carbamoyltransferase catalytic subunit (305 aa).

Carbamoyl phosphate contacts are provided by Arg-52 and Thr-53. Position 80 (Lys-80) interacts with L-aspartate. Arg-102, His-132, and Gln-135 together coordinate carbamoyl phosphate. Residues Arg-165 and Arg-217 each coordinate L-aspartate. Positions 258 and 259 each coordinate carbamoyl phosphate.

The protein belongs to the aspartate/ornithine carbamoyltransferase superfamily. ATCase family. Heterododecamer (2C3:3R2) of six catalytic PyrB chains organized as two trimers (C3), and six regulatory PyrI chains organized as three dimers (R2).

The catalysed reaction is carbamoyl phosphate + L-aspartate = N-carbamoyl-L-aspartate + phosphate + H(+). It functions in the pathway pyrimidine metabolism; UMP biosynthesis via de novo pathway; (S)-dihydroorotate from bicarbonate: step 2/3. In terms of biological role, catalyzes the condensation of carbamoyl phosphate and aspartate to form carbamoyl aspartate and inorganic phosphate, the committed step in the de novo pyrimidine nucleotide biosynthesis pathway. This is Aspartate carbamoyltransferase catalytic subunit from Latilactobacillus sakei subsp. sakei (strain 23K) (Lactobacillus sakei subsp. sakei).